Reading from the N-terminus, the 406-residue chain is Protease ElaD (406 aa).

Residue His-234 is part of the active site. Catalysis depends on Cys-316, which acts as the Nucleophile.

Belongs to the peptidase C79 family.

Protease that can act as an efficient and specific deubiquitinating enzyme in vitro. Does not possess desumoylating and deneddylating activities. The physiological substrate is unknown. In Escherichia coli O139:H28 (strain E24377A / ETEC), this protein is Protease ElaD (elaD).